A 488-amino-acid chain; its full sequence is Zinc finger protein 92 (488 aa).

Residues 14-85 (VSFEDVSVYF…DDGMESAARS (72 aa)) form the KRAB domain. 6 consecutive C2H2-type zinc fingers follow at residues 141 to 163 (YLCQQCGKSFSRSFNLIKHRIIH), 169 to 191 (YECSECGKQFQRSLALLEHQRIH), 197 to 219 (YECGECGKTFTRSSNLVKHQVIH), 225 to 247 (FVCRMCGKVFRRSFALLEHTRIH), 253 to 275 (FECTECGKAFSRSSNLIEHQRIH), and 281 to 303 (YICKECGKAFKGVSQLIHHQLIH). The C2H2-type 7; degenerate zinc-finger motif lies at 309-331 (FTCHEYGKAFRGLSGLSQHQRVH). The segment at 337–359 (YECSECGRAFGRRANLFKHQVVH) adopts a C2H2-type 8 zinc-finger fold. Residues 387 to 408 (QQPQEAGEGSSAEPQPIDTNEK) are disordered. The C2H2-type 9 zinc finger occupies 410–432 (QVCERCGQVFENKLLLCRHLRIH). Positions 435-488 (EDDKKQKPVISSTSVLEDKSLLSQHLEAQPTEESDSEGSVVFVYAEKPHGPSSP) are disordered.

The protein belongs to the krueppel C2H2-type zinc-finger protein family. In terms of tissue distribution, highly expressed in pancreatic islets.

It localises to the nucleus. KRAB domain-containing zinc-finger protein that represses B1/Alu SINE transposable elements and modulates the transcription of nearby genes in a tissue-specific manner. It regulates glucose homeostasis and lipid metabolism by modulating the expression of the endocrine cell-defining transcription factor, MAFB, in pancreatic islets and, the fat metabolism regulator, ACACB, in adipose tissue and muscle. This chain is Zinc finger protein 92 (Zfp92), found in Mus musculus (Mouse).